A 300-amino-acid chain; its full sequence is Inosose dehydratase (300 aa).

It belongs to the IolE/MocC family. The cofactor is glutathione. Requires Co(2+) as cofactor. Mn(2+) is required as a cofactor.

The catalysed reaction is scyllo-inosose = 3D-3,5/4-trihydroxycyclohexane-1,2-dione + H2O. Catalyzes the dehydration of inosose (2-keto-myo-inositol, 2KMI or 2,4,6/3,5-pentahydroxycyclohexanone) to 3D-(3,5/4)-trihydroxycyclohexane-1,2-dione (D-2,3-diketo-4-deoxy-epi-inositol). The protein is Inosose dehydratase of Mesomycoplasma hyopneumoniae (strain J / ATCC 25934 / NCTC 10110) (Mycoplasma hyopneumoniae).